The following is a 596-amino-acid chain: Protein kinase C iota type (596 aa).

The segment covering 1 to 12 (MPTQRDSSTMSH) has biased composition (polar residues). Residues 1-21 (MPTQRDSSTMSHTVACGGGGD) form a disordered region. At Pro-2 the chain carries N-acetylproline. The required for interaction with RAB2 stretch occupies residues 2-28 (PTQRDSSTMSHTVACGGGGDHSHQVRV). Residues 2-253 (PTQRDSSTMS…KASSSLGLQD (252 aa)) are regulatory domain. At Thr-3 the chain carries Phosphothreonine. A phosphoserine mark is found at Ser-7 and Ser-8. Thr-9 carries the post-translational modification Phosphothreonine. One can recognise a PB1 domain in the interval 25–108 (QVRVKAYYRG…SELLIHVFPC (84 aa)). Residues 72-91 (DEEGDPCTVSSQLELEEAFR) are interaction with PARD6A. The Pseudosubstrate motif lies at 125 to 134 (YRRGARRWRK). The Phorbol-ester/DAG-type zinc finger occupies 140–190 (GHTFQAKRFNRRAHCAICTDRIWGLGRQGYKCINCKLLVHKKCHKLVTIEC). The Protein kinase domain occupies 254 to 522 (FDLLRVIGRG…FADIQGHPFF (269 aa)). 260–268 (IGRGSYAKV) serves as a coordination point for ATP. Tyr-265 and Tyr-280 each carry phosphotyrosine; by SRC. Position 283 (Lys-283) interacts with ATP. A Phosphotyrosine; by SRC modification is found at Tyr-334. Residue Asp-378 is the Proton acceptor of the active site. Thr-412 is subject to Phosphothreonine; by PDPK1. Residues 523-594 (RNVDWDMMEQ…INPLLMSAEE (72 aa)) enclose the AGC-kinase C-terminal domain. A Phosphothreonine modification is found at Thr-564.

This sequence belongs to the protein kinase superfamily. AGC Ser/Thr protein kinase family. PKC subfamily. As to quaternary structure, forms a complex with SQSTM1 and MP2K5. Interacts directly with SQSTM1. Interacts with IKBKB. Interacts with PARD6A, PARD6B and PARD6G. Part of a quaternary complex containing aPKC, PARD3, a PARD6 protein (PARD6A, PARD6B or PARD6G) and a GTPase protein (CDC42 or RAC1). Part of a complex with LLGL1 and PARD6B. Interacts with ADAP1/CENTA1. Interaction with SMG1, through the ZN-finger domain, activates the kinase activity. Interacts with CDK7. Forms a complex with RAB2A and GAPDH involved in recruitment onto the membrane of vesicular tubular clusters (VTCs). Interacts with ECT2 ('Thr-359' phosphorylated form). Interacts with VAMP2. Interacts with WDFY2 (via WD repeats 1-3). In terms of processing, phosphorylation at Thr-412 in the activation loop is not mandatory for activation. Upon neuronal growth factor (NGF) stimulation, phosphorylated by SRC at Tyr-265, Tyr-280 and Tyr-334. Phosphorylation at Tyr-265 facilitates binding to KPNB1/importin-beta regulating entry of PRKCI into the nucleus. Phosphorylation on Tyr-334 is important for NF-kappa-B stimulation. Phosphorylated at Thr-564 during the initial phase of long term potentiation. As to expression, expressed in dorsal hippocampus (at protein level).

The protein resides in the cytoplasm. It localises to the membrane. It is found in the endosome. Its subcellular location is the nucleus. It carries out the reaction L-seryl-[protein] + ATP = O-phospho-L-seryl-[protein] + ADP + H(+). It catalyses the reaction L-threonyl-[protein] + ATP = O-phospho-L-threonyl-[protein] + ADP + H(+). Its activity is regulated as follows. Atypical PKCs (PRKCI and PRKCZ) exhibit an elevated basal enzymatic activity (that may be due to the interaction with SMG1 or SQSTM1) and are not regulated by diacylglycerol, phosphatidylserine, phorbol esters or calcium ions. Two specific sites, Thr-412 (activation loop of the kinase domain) and Thr-564 (turn motif), need to be phosphorylated for its full activation. Might also be a target for novel lipid activators that are elevated during nutrient-stimulated insulin secretion. Calcium- and diacylglycerol-independent serine/ threonine-protein kinase that plays a general protective role against apoptotic stimuli, is involved in NF-kappa-B activation, cell survival, differentiation and polarity, and contributes to the regulation of microtubule dynamics in the early secretory pathway. Is necessary for BCR-ABL oncogene-mediated resistance to apoptotic drug in leukemia cells, protecting leukemia cells against drug-induced apoptosis. In cultured neurons, prevents amyloid beta protein-induced apoptosis by interrupting cell death process at a very early step. In glioblastoma cells, may function downstream of phosphatidylinositol 3-kinase (PI3K) and PDPK1 in the promotion of cell survival by phosphorylating and inhibiting the pro-apoptotic factor BAD. Can form a protein complex in non-small cell lung cancer (NSCLC) cells with PARD6A and ECT2 and regulate ECT2 oncogenic activity by phosphorylation, which in turn promotes transformed growth and invasion. In response to nerve growth factor (NGF), acts downstream of SRC to phosphorylate and activate IRAK1, allowing the subsequent activation of NF-kappa-B and neuronal cell survival. Functions in the organization of the apical domain in epithelial cells by phosphorylating EZR. This step is crucial for activation and normal distribution of EZR at the early stages of intestinal epithelial cell differentiation. Forms a protein complex with LLGL1 and PARD6B independently of PARD3 to regulate epithelial cell polarity. Plays a role in microtubule dynamics in the early secretory pathway through interaction with RAB2A and GAPDH and recruitment to vesicular tubular clusters (VTCs). In human coronary artery endothelial cells (HCAEC), is activated by saturated fatty acids and mediates lipid-induced apoptosis. Downstream of PI3K is required for insulin-stimulated glucose transport. Activates RAB4A and promotes its association with KIF3A which is required for the insulin-induced SLC2A4/GLUT4 translocation in adipocytes. Is essential in early embryogenesis and development of differentiating photoreceptors by playing a role in the establishment of epithelial and neuronal polarity. Involved in early synaptic long term potentiation phase in CA1 hippocampal cells and short term memory formation. The chain is Protein kinase C iota type (Prkci) from Rattus norvegicus (Rat).